Consider the following 547-residue polypeptide: Probable bifunctional tRNA threonylcarbamoyladenosine biosynthesis protein (547 aa).

Positions 1 to 329 (MDTSKDLICI…YRSDMVEVNW (329 aa)) are kae1. The Fe cation site is built by histidine 112, histidine 116, and tyrosine 133. L-threonylcarbamoyladenylate-binding positions include 133 to 137 (YVSGG), aspartate 165, glycine 178, glutamate 182, and asparagine 262. Residue aspartate 290 coordinates Fe cation. The Protein kinase domain occupies 346–547 (IIPEHLIGKG…KEVEKRARYL (202 aa)). ATP is bound by residues 352–360 (IGKGAEADI) and lysine 373. Aspartate 465 acts as the Proton acceptor; for kinase activity in catalysis.

This sequence in the N-terminal section; belongs to the KAE1 / TsaD family. It in the C-terminal section; belongs to the protein kinase superfamily. Tyr protein kinase family. BUD32 subfamily. In terms of assembly, component of the KEOPS complex that consists of Kae1, Bud32, Cgi121 and Pcc1; the whole complex dimerizes. The cofactor is Fe(2+).

It is found in the cytoplasm. It carries out the reaction L-seryl-[protein] + ATP = O-phospho-L-seryl-[protein] + ADP + H(+). The catalysed reaction is L-threonyl-[protein] + ATP = O-phospho-L-threonyl-[protein] + ADP + H(+). It catalyses the reaction L-threonylcarbamoyladenylate + adenosine(37) in tRNA = N(6)-L-threonylcarbamoyladenosine(37) in tRNA + AMP + H(+). In terms of biological role, required for the formation of a threonylcarbamoyl group on adenosine at position 37 (t(6)A37) in tRNAs that read codons beginning with adenine. Is a component of the KEOPS complex that is probably involved in the transfer of the threonylcarbamoyl moiety of threonylcarbamoyl-AMP (TC-AMP) to the N6 group of A37. The Kae1 domain likely plays a direct catalytic role in this reaction. The Bud32 domain probably displays kinase activity that regulates Kae1 function. In Methanococcus maripaludis (strain C7 / ATCC BAA-1331), this protein is Probable bifunctional tRNA threonylcarbamoyladenosine biosynthesis protein.